Reading from the N-terminus, the 258-residue chain is Acyl-[acyl-carrier-protein]--UDP-N-acetylglucosamine O-acyltransferase (258 aa).

This sequence belongs to the transferase hexapeptide repeat family. LpxA subfamily. Homotrimer.

It localises to the cytoplasm. It catalyses the reaction a (3R)-hydroxyacyl-[ACP] + UDP-N-acetyl-alpha-D-glucosamine = a UDP-3-O-[(3R)-3-hydroxyacyl]-N-acetyl-alpha-D-glucosamine + holo-[ACP]. Its pathway is glycolipid biosynthesis; lipid IV(A) biosynthesis; lipid IV(A) from (3R)-3-hydroxytetradecanoyl-[acyl-carrier-protein] and UDP-N-acetyl-alpha-D-glucosamine: step 1/6. Involved in the biosynthesis of lipid A, a phosphorylated glycolipid that anchors the lipopolysaccharide to the outer membrane of the cell. The chain is Acyl-[acyl-carrier-protein]--UDP-N-acetylglucosamine O-acyltransferase from Pseudomonas fluorescens (strain SBW25).